The following is a 309-amino-acid chain: Non-homologous end-joining factor 1 (309 aa).

Positions 1-134 are globular head; it reads MEAVLSALPW…TPVAVVCRQL (134 aa). The interval 223-298 is C-terminal tail; sequence GKTGRKRKHS…AGSEDRSTSR (76 aa). The interval 223-309 is disordered; that stretch reads GKTGRKRKHS…KKKKAVGLFR (87 aa). The segment covering 243 to 252 has biased composition (basic and acidic residues); sequence HITDHQHISE. 2 stretches are compositionally biased toward polar residues: residues 253-265 and 273-290; these read STDV…SQEH and RSQV…STAG. The segment covering 297-309 has biased composition (basic residues); that stretch reads SRAKKKKAVGLFR. The short motif at 299–309 is the XLM element; the sequence is AKKKKAVGLFR.

This sequence belongs to the XRCC4-XLF family. XLF subfamily. In terms of assembly, homodimer. Interacts with xrcc4; the interaction is direct and is mediated via a head-to-head interaction between N-terminal head regions. Component of the core long-range non-homologous end joining (NHEJ) complex (also named DNA-PK complex) composed of prkdc/DNA-PKcs, lig4, xrcc4, xrcc6/Ku70, xrcc5/Ku80 and nhej1/xlf.

Its subcellular location is the nucleus. The protein resides in the chromosome. Functionally, DNA repair protein involved in DNA non-homologous end joining (NHEJ); it is required for double-strand break (DSB) repair and V(D)J recombination and is also involved in telomere maintenance. Plays a key role in NHEJ by promoting the ligation of various mismatched and non-cohesive ends. In some studies, has been shown to associate with xrcc4 to form alternating helical filaments that bridge DNA and act like a bandage, holding together the broken DNA until it is repaired. Alternatively, it has also been shown that rather than forming filaments, a single nhej1 dimer interacts through both head domains with xrcc4 to promote the close alignment of DNA ends. The xrcc4-nhej1/xlf subcomplex binds to the DNA fragments of a DSB in a highly diffusive manner and robustly bridges two independent DNA molecules, holding the broken DNA fragments in close proximity to one other. The mobility of the bridges ensures that the ends remain accessible for further processing by other repair factors. This is Non-homologous end-joining factor 1 (nhej1) from Danio rerio (Zebrafish).